We begin with the raw amino-acid sequence, 43 residues long: Omega-agatoxin-Aa3c (43 aa).

3 cysteine pairs are disulfide-bonded: C2/C19, C9/C25, and C27/C38.

Belongs to the neurotoxin 04 (omega-agtx) family. 03 (type II/III omega-agtx) subfamily. As to expression, expressed by the venom gland.

The protein resides in the secreted. Omega-agatoxins are antagonists of voltage-gated calcium channels (Cav). This is Omega-agatoxin-Aa3c from Agelenopsis aperta (North American funnel-web spider).